The primary structure comprises 105 residues: Large ribosomal subunit protein uL24 (105 aa).

Positions 67–105 (HISNLNPVDPKTGKATRIGRRKSSEGTLVRYSKKSGEEI) are disordered.

The protein belongs to the universal ribosomal protein uL24 family. In terms of assembly, part of the 50S ribosomal subunit.

In terms of biological role, one of two assembly initiator proteins, it binds directly to the 5'-end of the 23S rRNA, where it nucleates assembly of the 50S subunit. One of the proteins that surrounds the polypeptide exit tunnel on the outside of the subunit. This chain is Large ribosomal subunit protein uL24, found in Bacteroides thetaiotaomicron (strain ATCC 29148 / DSM 2079 / JCM 5827 / CCUG 10774 / NCTC 10582 / VPI-5482 / E50).